A 110-amino-acid polypeptide reads, in one-letter code: MAIGLNVTEPEVSCADTNCPFHGSLSVRGQTLEGTVASTDMDKTVIVEREYDVRVPKYDRLMKRRSRIPAHAPPCVDLAEGDTVRIAETRPLSKTKSHVVVEQIDTGGAE.

The protein belongs to the universal ribosomal protein uS17 family. Part of the 30S ribosomal subunit.

Its function is as follows. One of the primary rRNA binding proteins, it binds specifically to the 5'-end of 16S ribosomal RNA. The polypeptide is Small ribosomal subunit protein uS17 (Haloquadratum walsbyi (strain DSM 16790 / HBSQ001)).